An 87-amino-acid polypeptide reads, in one-letter code: Small ribosomal subunit protein uS17 (87 aa).

Belongs to the universal ribosomal protein uS17 family. In terms of assembly, part of the 30S ribosomal subunit.

Its function is as follows. One of the primary rRNA binding proteins, it binds specifically to the 5'-end of 16S ribosomal RNA. This chain is Small ribosomal subunit protein uS17, found in Cytophaga hutchinsonii (strain ATCC 33406 / DSM 1761 / CIP 103989 / NBRC 15051 / NCIMB 9469 / D465).